Consider the following 314-residue polypeptide: NAD-dependent protein lipoamidase sirtuin-4, mitochondrial (314 aa).

The N-terminal 28 residues, 1 to 28, are a transit peptide targeting the mitochondrion; it reads MKMSFALTFRSAKGRWIANPSQPCSKAS. One can recognise a Deacetylase sirtuin-type domain in the interval 37 to 314; it reads PPLDPEKVKE…GELLPLIDPC (278 aa). NAD(+) contacts are provided by residues 62–82 and 143–146; these read GAGI…VGLY and QNVD. The active-site Proton acceptor is the histidine 161. 4 residues coordinate Zn(2+): cysteine 169, cysteine 172, cysteine 220, and cysteine 223. NAD(+) contacts are provided by residues 260 to 262, 286 to 288, and cysteine 304; these read GSS and NIG.

Belongs to the sirtuin family. Class II subfamily. Interacts with GLUD1, IDE and SLC25A5. Interacts with DLAT and PDHX. Interacts with MCCC1 (via the biotin carboxylation domain). Interacts with PCCA and PC. Zn(2+) serves as cofactor. Detected in vascular smooth muscle and striated muscle. Detected in insulin-producing beta-cells in pancreas islets of Langerhans (at protein level). Widely expressed. Weakly expressed in leukocytes and fetal thymus.

It is found in the mitochondrion matrix. The catalysed reaction is N(6)-[(R)-lipoyl]-L-lysyl-[protein] + NAD(+) + H2O = 2''-O-lipoyl-ADP-D-ribose + nicotinamide + L-lysyl-[protein]. It catalyses the reaction N(6)-biotinyl-L-lysyl-[protein] + NAD(+) + H2O = 2''-O-biotinyl-ADP-D-ribose + nicotinamide + L-lysyl-[protein]. It carries out the reaction N(6)-acetyl-L-lysyl-[protein] + NAD(+) + H2O = 2''-O-acetyl-ADP-D-ribose + nicotinamide + L-lysyl-[protein]. The enzyme catalyses L-cysteinyl-[protein] + NAD(+) = S-(ADP-D-ribosyl)-L-cysteinyl-[protein] + nicotinamide + H(+). Acts as a NAD-dependent protein lipoamidase, biotinylase, deacetylase and ADP-ribosyl transferase. Catalyzes more efficiently removal of lipoyl- and biotinyl- than acetyl-lysine modifications. Inhibits the pyruvate dehydrogenase complex (PDH) activity via the enzymatic hydrolysis of the lipoamide cofactor from the E2 component, DLAT, in a phosphorylation-independent manner. Catalyzes the transfer of ADP-ribosyl groups onto target proteins, including mitochondrial GLUD1, inhibiting GLUD1 enzyme activity. Acts as a negative regulator of mitochondrial glutamine metabolism by mediating mono ADP-ribosylation of GLUD1: expressed in response to DNA damage and negatively regulates anaplerosis by inhibiting GLUD1, leading to block metabolism of glutamine into tricarboxylic acid cycle and promoting cell cycle arrest. In response to mTORC1 signal, SIRT4 expression is repressed, promoting anaplerosis and cell proliferation. Acts as a tumor suppressor. Also acts as a NAD-dependent protein deacetylase: mediates deacetylation of 'Lys-471' of MLYCD, inhibiting its activity, thereby acting as a regulator of lipid homeostasis. Does not seem to deacetylate PC. Controls fatty acid oxidation by inhibiting PPARA transcriptional activation. Impairs SIRT1-PPARA interaction probably through the regulation of NAD(+) levels. Down-regulates insulin secretion. The protein is NAD-dependent protein lipoamidase sirtuin-4, mitochondrial of Homo sapiens (Human).